The following is a 259-amino-acid chain: Global transcriptional regulator CodY (259 aa).

Residues 1-155 (MELLAKTRKL…SSTVVGMEIL (155 aa)) are GAF domain. The H-T-H motif DNA-binding region spans 203-222 (ASKIADRVGITRSVIVNALR). Ser-215 is modified (phosphoserine).

Belongs to the CodY family.

It localises to the cytoplasm. In terms of biological role, DNA-binding global transcriptional regulator which is involved in the adaptive response to starvation and acts by directly or indirectly controlling the expression of numerous genes in response to nutrient availability. During rapid exponential growth, CodY is highly active and represses genes whose products allow adaptation to nutrient depletion. This Bacillus cereus (strain ATCC 10987 / NRS 248) protein is Global transcriptional regulator CodY.